Here is a 409-residue protein sequence, read N- to C-terminus: Broad specificity amino-acid racemase (409 aa).

The first 25 residues, M1–A25, serve as a signal peptide directing secretion. Residues C72 and C98 are joined by a disulfide bond. The active-site Proton acceptor is K76. Position 76 is an N6-(pyridoxal phosphate)lysine (K76). R175 is a binding site for substrate. Residue Y301 is the Proton acceptor of the active site. M349 provides a ligand contact to substrate.

It belongs to the alanine racemase family. Bsr subfamily. Pyridoxal 5'-phosphate serves as cofactor.

It is found in the periplasm. The catalysed reaction is an L-alpha-amino acid = a D-alpha-amino acid. It carries out the reaction L-lysine = D-lysine. The enzyme catalyses L-arginine = D-arginine. Amino-acid racemase able to utilize a broad range of substrates. The chain is Broad specificity amino-acid racemase from Vibrio parahaemolyticus serotype O3:K6 (strain RIMD 2210633).